Here is a 417-residue protein sequence, read N- to C-terminus: Secernin-3 (417 aa).

The propeptide occupies methionine 1–serine 5. Cysteine 6 is an active-site residue. The residue at position 6 (cysteine 6) is a Glyoxylic acid (Cys); alternate. Cysteine 6 bears the Pyruvic acid (Cys); alternate mark.

This sequence belongs to the peptidase C69 family. Secernin subfamily.

In terms of biological role, plays a role in thermal nociception. In Danio rerio (Zebrafish), this protein is Secernin-3 (scrn3).